A 251-amino-acid chain; its full sequence is Derlin-1 (251 aa).

S2 bears the N-acetylserine mark. The Cytoplasmic segment spans residues S2–T15. Residues R16–L31 form a helical membrane-spanning segment. The Lumenal portion of the chain corresponds to G32–G69. Residues F70–G89 traverse the membrane as a helical segment. Residues A90–R94 are Cytoplasmic-facing. A helical membrane pass occupies residues P95–A115. Residues M116–M122 are Lumenal-facing. Residues I123–N137 form a helical membrane-spanning segment. Residues R138–Y154 lie on the Cytoplasmic side of the membrane. A helical transmembrane segment spans residues L155–I166. Residues G167–V170 are Lumenal-facing. A helical transmembrane segment spans residues I171–R189. At Y190 to Q251 the chain is on the cytoplasmic side. A Phosphoserine modification is found at S201. T202 carries the phosphothreonine modification. S226 bears the Phosphoserine mark. The tract at residues R229–Q251 is disordered. The short motif at N241–L248 is the SHP-box element.

It belongs to the derlin family. Homotetramer. The four subunits of the tetramer are arranged in a twofold symmetry. Forms homo- and heterooligomers with DERL2 and DERL3; binding to DERL3 is poorer than that between DERL2 and DERL3. Interacts (via SHP-box motif) with VCP. Interacts with AMFR, SELENOS, SEL1L, SELENOK and SYVN1, as well as with SEL1L-SYVN1 and VCP-SELENOS protein complexes; this interaction is weaker than that observed between DERL2 and these complexes. Interacts with NGLY1 and YOD1. Does not bind to EDEM1. Interacts with DNAJB9. Interacts with RNF103. Interacts with HM13. Interacts with XBP1 isoform 1 (via luminal/ectodomain domain); the interaction obviates the need for ectodomain shedding prior HM13/SPP-mediated XBP1 isoform 1 cleavage. Interacts with the signal recognition particle/SRP and the SRP receptor; in the process of endoplasmic reticulum stress-induced pre-emptive quality control. May interact with UBXN6. Interacts with ZFAND2B; probably through VCP. Interacts with CCDC47. Interacts with C18orf32. May interact with TRAM1. Forms a complex with SVIP and VCP/p97.

The protein localises to the endoplasmic reticulum membrane. Functionally, functional component of endoplasmic reticulum-associated degradation (ERAD) for misfolded lumenal proteins. Forms homotetramers which encircle a large channel traversing the endoplasmic reticulum (ER) membrane. This allows the retrotranslocation of misfolded proteins from the ER into the cytosol where they are ubiquitinated and degraded by the proteasome. The channel has a lateral gate within the membrane which provides direct access to membrane proteins with no need to reenter the ER lumen first. May mediate the interaction between VCP and the misfolded protein. Also involved in endoplasmic reticulum stress-induced pre-emptive quality control, a mechanism that selectively attenuates the translocation of newly synthesized proteins into the endoplasmic reticulum and reroutes them to the cytosol for proteasomal degradation. By controlling the steady-state expression of the IGF1R receptor, indirectly regulates the insulin-like growth factor receptor signaling pathway. In Pongo abelii (Sumatran orangutan), this protein is Derlin-1.